Reading from the N-terminus, the 551-residue chain is MANMVVTGEQLDKSIREVVRILEDAVGCTAGPKGLTVAISKPYGAPEVTKDGYKVMKSIKPEDPLALAIANIIAQSASQCNDKVGDGTTTCSILTAKVIEEVSKVKAAGADIICVREGVLKAKEAVLEALKCMKREVLSEEEIAQVATISANGDKNIGTKIAQCVKEVGKDGVITVEESKGFKELDVEKTDGMQFDRGYLSPYFVTNSEKMLVEFENPYILLTEKKLNIIQPLLPILENIARSGRPLLIIAEDVEGEALSTLVLNKLRGGLHVAAVKAPGFGDRRKDMLGDIAILTGAKHVINDELAIKMEDLTLCDLGTAKNIRITKDTTTIIGSVDNSCAHVQSRICQIRMQIDNSTSDYDKEKLQERLAKLSGGVAVLKVGGSSEVEVKERKDRVEDALHATRAAVEEGVVPGGGAALLYTLSALDNLKSKNDDEQLGINIVKRALQAPIKRIIKNAGSENAPCVIAHLLKQNDKELIFNVDVMNFANAFTSGVIDPLKVVRIAFDFAVSLAAVFMTLNAIVVDIPSKDDNSAAGGAGMGGMGGMGGF.

ATP is bound by residues 29-32 (TAGP), lysine 50, 86-90 (DGTTT), glycine 417, and aspartate 499.

This sequence belongs to the chaperonin (HSP60) family. As to quaternary structure, forms a cylinder of 14 subunits composed of two heptameric rings stacked back-to-back. Interacts with the co-chaperonin GroES.

It is found in the cytoplasm. It carries out the reaction ATP + H2O + a folded polypeptide = ADP + phosphate + an unfolded polypeptide.. Functionally, together with its co-chaperonin GroES, plays an essential role in assisting protein folding. The GroEL-GroES system forms a nano-cage that allows encapsulation of the non-native substrate proteins and provides a physical environment optimized to promote and accelerate protein folding. The polypeptide is Chaperonin GroEL (Ehrlichia ruminantium (strain Gardel)).